The following is a 484-amino-acid chain: Probable cytochrome P450 316a1 (484 aa).

Residue Cys-433 coordinates heme.

Belongs to the cytochrome P450 family. It depends on heme as a cofactor.

Its subcellular location is the endoplasmic reticulum membrane. It is found in the microsome membrane. May be involved in the metabolism of insect hormones and in the breakdown of synthetic insecticides. In Drosophila melanogaster (Fruit fly), this protein is Probable cytochrome P450 316a1 (Cyp316a1).